The sequence spans 75 residues: Cytochrome c oxidase subunit 6C (75 aa).

Topologically, residues 1–13 are mitochondrial matrix; it reads MSSGALTKPQMRG. A helical transmembrane segment spans residues 14 to 54; it reads LLAKRLRFHIVGAFAVSLGVAAFYKFAVAEPRKKAYADFYR. Over 55-75 the chain is Mitochondrial intermembrane; the sequence is NYDSMKDFEEMRKAGIFQSAK.

This sequence belongs to the cytochrome c oxidase subunit 6c family. In terms of assembly, component of the cytochrome c oxidase (complex IV, CIV), a multisubunit enzyme composed of 14 subunits. The complex is composed of a catalytic core of 3 subunits MT-CO1, MT-CO2 and MT-CO3, encoded in the mitochondrial DNA, and 11 supernumerary subunits COX4I, COX5A, COX5B, COX6A, COX6B, COX6C, COX7A, COX7B, COX7C, COX8 and NDUFA4, which are encoded in the nuclear genome. The complex exists as a monomer or a dimer and forms supercomplexes (SCs) in the inner mitochondrial membrane with NADH-ubiquinone oxidoreductase (complex I, CI) and ubiquinol-cytochrome c oxidoreductase (cytochrome b-c1 complex, complex III, CIII), resulting in different assemblies (supercomplex SCI(1)III(2)IV(1) and megacomplex MCI(2)III(2)IV(2)).

The protein resides in the mitochondrion inner membrane. Its pathway is energy metabolism; oxidative phosphorylation. Functionally, component of the cytochrome c oxidase, the last enzyme in the mitochondrial electron transport chain which drives oxidative phosphorylation. The respiratory chain contains 3 multisubunit complexes succinate dehydrogenase (complex II, CII), ubiquinol-cytochrome c oxidoreductase (cytochrome b-c1 complex, complex III, CIII) and cytochrome c oxidase (complex IV, CIV), that cooperate to transfer electrons derived from NADH and succinate to molecular oxygen, creating an electrochemical gradient over the inner membrane that drives transmembrane transport and the ATP synthase. Cytochrome c oxidase is the component of the respiratory chain that catalyzes the reduction of oxygen to water. Electrons originating from reduced cytochrome c in the intermembrane space (IMS) are transferred via the dinuclear copper A center (CU(A)) of subunit 2 and heme A of subunit 1 to the active site in subunit 1, a binuclear center (BNC) formed by heme A3 and copper B (CU(B)). The BNC reduces molecular oxygen to 2 water molecules using 4 electrons from cytochrome c in the IMS and 4 protons from the mitochondrial matrix. This chain is Cytochrome c oxidase subunit 6C (COX6C), found in Carlito syrichta (Philippine tarsier).